Reading from the N-terminus, the 660-residue chain is Phosphatidylinositol-3-phosphate phosphatase MTMR7 (660 aa).

Residues 126-504 (GWLLVDLSEE…FTYKFWNGMY (379 aa)) enclose the Myotubularin phosphatase domain. Positions 250, 275, and 276 each coordinate a 1,2-diacyl-sn-glycero-3-phospho-(1D-myo-inositol-3-phosphate). Residue C338 is the Phosphocysteine intermediate of the active site. A 1,2-diacyl-sn-glycero-3-phospho-(1D-myo-inositol-3-phosphate) is bound by residues S339, D340, G341, W342, D343, R344, and R384. Positions 514-548 (RQSVTDYLMAVKEESQQLEEELESLEERLEKIQKV) form a coiled coil. Residues 550–660 (LHGTKVKSKQ…DSDEAVFLTA (111 aa)) are disordered. Over residues 566–596 (SGFSTSDHSTANTPQDYSGNSKSFPSRSPSQ) the composition is skewed to polar residues. T578 is subject to Phosphothreonine. Positions 641–653 (APSEDSGKDRDSD) are enriched in basic and acidic residues.

It belongs to the protein-tyrosine phosphatase family. Non-receptor class myotubularin subfamily. In terms of assembly, heterodimer (via C-terminus) with MTMR9 (via coiled coil domain); the interaction enhances MTMR7 catalytic activity. Does not homodimerize. Interacts with RAB1B (in GDP-bound form). As to expression, highly expressed in brain (at protein level). Expressed at low levels in liver, kidney and testis.

It is found in the cytoplasm. It localises to the endomembrane system. The enzyme catalyses a 1,2-diacyl-sn-glycero-3-phospho-(1D-myo-inositol-3-phosphate) + H2O = a 1,2-diacyl-sn-glycero-3-phospho-(1D-myo-inositol) + phosphate. It carries out the reaction 1D-myo-inositol 1,3-bisphosphate + H2O = 1D-myo-inositol 1-phosphate + phosphate. With respect to regulation, interaction with MTMR9 increases phosphatase activity. Lipid phosphatase that specifically dephosphorylates the D-3 position of phosphatidylinositol 3-phosphate (PtdIns(3)P) and inositol 1,3-bisphosphate (Ins(1,3)P2). The chain is Phosphatidylinositol-3-phosphate phosphatase MTMR7 from Mus musculus (Mouse).